Reading from the N-terminus, the 359-residue chain is 4-galactosyl-N-acetylglucosaminide 3-alpha-L-fucosyltransferase 9 (359 aa).

The Cytoplasmic portion of the chain corresponds to 1–11 (MTSTSKGILRP). The chain crosses the membrane as a helical; Signal-anchor for type II membrane protein span at residues 12–32 (FLIVCIILGCFVACLLIYIKP). At 33-359 (TNSWVFSPME…VGNLEKWFWN (327 aa)) the chain is on the lumenal side. The N-linked (GlcNAc...) asparagine glycan is linked to Asn62. Residues 63-168 (ETTILVWVWP…RRDSDIQVPY (106 aa)) form an acceptor-binding region. Residue Gln75 coordinates a beta-D-galactosyl-(1-&gt;4)-N-acetyl-beta-D-glucosaminyl derivative. Cystine bridges form between Cys82/Cys335, Cys91/Cys338, and Cys190/Cys238. Residue Asn101 is glycosylated (N-linked (GlcNAc...) asparagine). Residue Glu137 participates in a beta-D-galactosyl-(1-&gt;4)-N-acetyl-beta-D-glucosaminyl derivative binding. Glu137 functions as the Nucleophile in the catalytic mechanism. Glu137 lines the GDP-beta-L-fucose pocket. An N-linked (GlcNAc...) asparagine glycan is attached at Asn153. Residues Tyr168, Val192, Ser194, Asn195, Arg202, Val226, Tyr241, Asn246, Tyr252, Glu255, and Lys256 each coordinate GDP-beta-L-fucose. Residues 169–326 (GFLTVSTSPF…NWRKDFTVNL (158 aa)) are donor-binding. The segment at 327–359 (PRFWESHACLACDHVKRHQEYKSVGNLEKWFWN) is acceptor-binding.

The protein belongs to the glycosyltransferase 10 family. Homodimer. Post-translationally, N-glycosylated with complex-type N-glycans.

The protein localises to the golgi apparatus. Its subcellular location is the trans-Golgi network membrane. It is found in the golgi apparatus membrane. The enzyme catalyses a beta-D-galactosyl-(1-&gt;4)-N-acetyl-beta-D-glucosaminyl derivative + GDP-beta-L-fucose = a beta-D-galactosyl-(1-&gt;4)-[alpha-L-fucosyl-(1-&gt;3)]-N-acetyl-beta-D-glucosaminyl derivative + GDP + H(+). It carries out the reaction an alpha-Neu5Ac-(2-&gt;3)-beta-D-Gal-(1-&gt;4)-beta-D-GlcNAc-(1-&gt;3)-beta-D-Gal-(1-&gt;4)-beta-D-GlcNAc derivative + GDP-beta-L-fucose = an alpha-Neu5Ac-(2-&gt;3)-beta-D-Gal-(1-&gt;4)-beta-D-GlcNAc-(1-&gt;3)-beta-D-Gal-(1-&gt;4)-[alpha-L-Fuc-(1-&gt;3)]-beta-D-GlcNAc derivative + GDP + H(+). It catalyses the reaction alpha-N-glycoloylneuraminosyl-(2-&gt;3)-beta-D-galactosyl-(1-&gt;4)-N-acetyl-beta-D-glucosaminyl-(1-&gt;3)-beta-D-galactosyl-(1-&gt;4)-N-acetyl-beta-D-glucosaminyl-(1-&gt;3)-beta-D-galactosyl-(1-&gt;4)-beta-D-glucosyl-(1&lt;-&gt;1')-ceramide + GDP-beta-L-fucose = alpha-N-glycoloylneuraminosyl-(2-&gt;3)-beta-D-galactosyl-(1-&gt;4)-N-acetyl-beta-D-glucosaminyl-(1-&gt;3)-beta-D-galactosyl-(1-&gt;4)-[alpha-L-fucosyl-(1-&gt;3)]-N-acetyl-beta-D-glucosaminyl-(1-&gt;3)-beta-D-galactosyl-(1-&gt;4)-beta-D-glucosyl-(1&lt;-&gt;1')-ceramide + GDP + H(+). The catalysed reaction is alpha-D-galactosyl-(1-&gt;3)-beta-D-galactosyl-(1-&gt;4)-N-acetyl-beta-D-glucosaminyl-(1-&gt;3)-beta-D-galactosyl-(1-&gt;4)-beta-D-glucosyl-(1&lt;-&gt;1')-ceramide + GDP-beta-L-fucose = a neolactoside IV(3)-alpha-Gal,III(3)-alpha-Fuc-nLc4Cer + GDP + H(+). The enzyme catalyses a neolactoside nLc4Cer + GDP-beta-L-fucose = a neolactoside III(3)-alpha-Fuc-nLc4Cer + GDP + H(+). It carries out the reaction an N-acetyl-alpha-neuraminyl-(2-&gt;3)-beta-D-galactosyl-(1-&gt;4)-N-acetyl-beta-D-glucosaminyl derivative + GDP-beta-L-fucose = an alpha-Neu5Ac-(2-&gt;3)-beta-D-Gal-(1-&gt;4)-[alpha-L-Fuc-(1-&gt;3)]-beta-D-GlcNAc derivative + GDP + H(+). It catalyses the reaction beta-D-Gal-(1-&gt;4)-beta-D-GlcNAc-(1-&gt;3)-beta-D-Gal-(1-&gt;4)-D-Glc + GDP-beta-L-fucose = beta-D-Gal-(1-&gt;4)-[alpha-L-Fuc-(1-&gt;3)]-beta-D-GlcNAc-(1-&gt;3)-beta-D-Gal-(1-&gt;4)-D-Glc + GDP + H(+). The catalysed reaction is an alpha-L-Fuc-(1-&gt;2)-beta-D-Gal-(1-&gt;4)-beta-D-GlcNAc derivative + GDP-beta-L-fucose = an alpha-L-Fuc-(1-&gt;2)-beta-D-Gal-(1-&gt;4)-[alpha-L-Fuc-(1-&gt;3)]-beta-D-GlcNAc derivative + GDP + H(+). The protein operates within protein modification; protein glycosylation. It participates in glycolipid biosynthesis. Its activity is regulated as follows. Activated by Mn2+. Catalyzes alpha(1-&gt;3) linkage of fucosyl moiety transferred from GDP-beta-L-fucose to N-acetyl glucosamine (GlcNAc) within type 2 lactosamine (LacNAc, beta-D-Gal-(1-&gt;4)-beta-D-GlcNAc-) glycan attached to glycolipids and N- or O-linked glycoproteins. Fucosylates distal type 2 LacNAc and its fucosylated (H-type 2 LacNAc) and sialylated (sialyl-type 2 LacNAc) derivatives to form Lewis x (Lex) (CD15) and Lewis y (Ley) antigenic epitopes involved in cell adhesion and differentiation. Generates Lex epitopes in the brain, presumably playing a role in the maintenance of neuronal stemness and neurite outgrowth in progenitor neural cells. Fucosylates the internal type 2 LacNAc unit of the polylactosamine chain to form VIM-2 antigen that serves as recognition epitope for SELE. Can also modify milk oligosaccharides in particular type 2 tetrasaccharide LNnT. In Rattus norvegicus (Rat), this protein is 4-galactosyl-N-acetylglucosaminide 3-alpha-L-fucosyltransferase 9.